Consider the following 795-residue polypeptide: Forkhead box protein P4 (795 aa).

The segment covering 1 to 25 (MMVESASETIRSAPSGQNGVGSLSA) has biased composition (polar residues). Residues 1 to 62 (MMVESASETI…SGGADSNGEM (62 aa)) form a disordered region. Positions 36–45 (AGTAPAAGRD) are enriched in low complexity. Residues Ser-58 and Ser-92 each carry the phosphoserine modification. Lys-181 is covalently cross-linked (Glycyl lysine isopeptide (Lys-Gly) (interchain with G-Cter in SUMO2)). Disordered stretches follow at residues 233–252 (PQLW…SGRQ) and 265–310 (TSFA…PLYG). The segment covering 292–303 (SRRDSSSHEETP) has biased composition (basic and acidic residues). The C2H2-type zinc-finger motif lies at 312-337 (GECKWPGCETLCEDLGQFIKHLNTEH). Positions 354-375 (VQQLEIQLAKESERLQAMMAHL) are leucine-zipper. A disordered region spans residues 379–437 (PSEPKPFSQPVTVSADPFPDGLVHPPTSAAAPVTPLRPPGLGSASLHSGGPARRRSNDK). Lys-383 is covalently cross-linked (Glycyl lysine isopeptide (Lys-Gly) (interchain with G-Cter in SUMO2)). Residues 459-549 (RPPFTYASLI…PPKMTGSPTL (91 aa)) constitute a DNA-binding region (fork-head). Phosphoserine is present on Ser-546. A disordered region spans residues 589 to 671 (ASSLLPLSQE…LEEDLGGEDM (83 aa)). Polar residues predominate over residues 609–627 (SNGSSSPPRLSPPQYSHQI). The segment covering 628–642 (QVKEEPAEAEEDRRP) has biased composition (basic and acidic residues).

In terms of assembly, forms homodimers and heterodimers with FOXP1 and FOXP2. Dimerization is required for DNA-binding. Expressed in the adult heart, brain, spleen lung, liver, kidney and testes.

It localises to the nucleus. Functionally, transcriptional repressor that represses lung-specific expression. This is Forkhead box protein P4 from Mus musculus (Mouse).